Reading from the N-terminus, the 288-residue chain is UTP--glucose-1-phosphate uridylyltransferase (288 aa).

This sequence belongs to the UDPGP type 2 family.

It catalyses the reaction alpha-D-glucose 1-phosphate + UTP + H(+) = UDP-alpha-D-glucose + diphosphate. It participates in glycolipid metabolism; diglucosyl-diacylglycerol biosynthesis. In terms of biological role, catalyzes the formation of UDP-glucose from glucose-1-phosphate and UTP. This is an intermediate step in the biosynthesis of diglucosyl-diacylglycerol (Glc2-DAG), i.e. the predominant glycolipid found in the S.aureus membrane, which is also used as a membrane anchor for lipoteichoic acid (LTA). The protein is UTP--glucose-1-phosphate uridylyltransferase (gtaB) of Staphylococcus aureus (strain bovine RF122 / ET3-1).